The primary structure comprises 515 residues: Vacuolar segregation protein PEP7 (515 aa).

Residues 6 to 29 (VSCPICLRKFDNLQALNAHLDVEH) form a C2H2-type zinc finger. Residues 36 to 58 (DSLGSNDSRLVNGKQKKARSVDS) are disordered. The FYVE-type 1; atypical zinc finger occupies 72 to 137 (KKGKSCCHTC…CCHDCFVTKP (66 aa)). Positions 78, 81, 94, 97, 102, 105, 129, 132, 221, 224, 237, 240, 245, 252, 289, and 292 each coordinate Zn(2+). The FYVE-type 2 zinc finger occupies 215–297 (DRSVLFCNIC…LCSHCIDMLF (83 aa)).

In terms of assembly, interacts with VPS21, VPS45, PEP3 and PEP5.

It is found in the vacuole membrane. Functionally, required for vacuole segregation and vacuole protein sorting. Possibly part of a complex which tethers the vacuole membrane to microtubules, either directly or via kinesin or dynein-like motor proteins. Probably functions in several interorganelle traffic pathways. The protein is Vacuolar segregation protein PEP7 (PEP7) of Saccharomyces cerevisiae (strain ATCC 204508 / S288c) (Baker's yeast).